The chain runs to 340 residues: Protein B17 (340 aa).

The protein belongs to the orthopoxvirus B17 protein family.

The polypeptide is Protein B17 (Vaccinia virus (strain Copenhagen) (VACV)).